Consider the following 874-residue polypeptide: Alanine--tRNA ligase (874 aa).

Zn(2+)-binding residues include His562, His566, Cys664, and His668.

It belongs to the class-II aminoacyl-tRNA synthetase family. Requires Zn(2+) as cofactor.

The protein resides in the cytoplasm. The enzyme catalyses tRNA(Ala) + L-alanine + ATP = L-alanyl-tRNA(Ala) + AMP + diphosphate. Catalyzes the attachment of alanine to tRNA(Ala) in a two-step reaction: alanine is first activated by ATP to form Ala-AMP and then transferred to the acceptor end of tRNA(Ala). Also edits incorrectly charged Ser-tRNA(Ala) and Gly-tRNA(Ala) via its editing domain. In Neisseria meningitidis serogroup C / serotype 2a (strain ATCC 700532 / DSM 15464 / FAM18), this protein is Alanine--tRNA ligase.